Consider the following 21-residue polypeptide: Brevinin-2-related peptide (21 aa).

Leu21 carries the post-translational modification Leucine amide.

In terms of tissue distribution, expressed by the skin glands.

It is found in the secreted. Its function is as follows. Antimicrobial peptide with activity against Gram-negative and Gram-positive bacteria (MIC=13 uM against E.coli, MIC=25 uM against S.aureus) and fungi (MIC=25 uM against C.albicans). Also shows hemolytic activity (HC(50)=50 uM). In vitro, shows moderate inhibitory activity against HIV. This is Brevinin-2-related peptide from Lithobates septentrionalis (Mink frog).